We begin with the raw amino-acid sequence, 123 residues long: Thioredoxin domain-containing protein 17 (123 aa).

Positions 41–123 (SWCPDCVTAE…DLVRMMFTED (83 aa)) constitute a Thioredoxin domain. Residues Cys-43 and Cys-46 each act as nucleophile in the active site. A disulfide bond links Cys-43 and Cys-46.

Belongs to the thioredoxin family. As to expression, predominantly expressed in liver, brain and muscle. Also expressed in kidney, intestine, skin, stomach, gill and head kidney.

The protein localises to the cytoplasm. In terms of biological role, disulfide reductase. May participate in various redox reactions through the reversible oxidation of its active center dithiol to a disulfide and catalyze dithiol-disulfide exchange reactions. Has peroxidase activity and may contribute to the elimination of cellular hydrogen peroxide. May function as an antioxidant involved in response to viral infection. This is Thioredoxin domain-containing protein 17 from Epinephelus coioides (Orange-spotted grouper).